Here is a 178-residue protein sequence, read N- to C-terminus: Large ribosomal subunit protein uL5 (178 aa).

Belongs to the universal ribosomal protein uL5 family. In terms of assembly, part of the 50S ribosomal subunit; part of the 5S rRNA/L5/L18/L25 subcomplex. Contacts the 5S rRNA and the P site tRNA. Forms a bridge to the 30S subunit in the 70S ribosome.

In terms of biological role, this is one of the proteins that bind and probably mediate the attachment of the 5S RNA into the large ribosomal subunit, where it forms part of the central protuberance. In the 70S ribosome it contacts protein S13 of the 30S subunit (bridge B1b), connecting the 2 subunits; this bridge is implicated in subunit movement. Contacts the P site tRNA; the 5S rRNA and some of its associated proteins might help stabilize positioning of ribosome-bound tRNAs. The protein is Large ribosomal subunit protein uL5 of Wigglesworthia glossinidia brevipalpis.